The chain runs to 1914 residues: Myosin light chain kinase, smooth muscle (1914 aa).

The residue at position 2 (Gly2) is an N-acetylalanine. 2 consecutive Ig-like C2-type domains span residues 33–122 and 161–249; these read PAFI…VELT and PKFA…AELS. A disulfide bridge links Cys182 with Cys233. Tyr231 carries the phosphotyrosine; by ABL1 modification. The segment at 286–393 is disordered; sequence DSLEAAAKSK…TRQPGLGSQD (108 aa). Position 305 is a phosphoserine (Ser305). Positions 318-329 are enriched in basic and acidic residues; that stretch reads RESKLESCKDSP. Polar residues predominate over residues 331-347; that stretch reads TAPQTPVLQKTSSSITL. A phosphoserine mark is found at Ser343 and Ser365. Ig-like C2-type domains lie at 414-503 and 514-599; these read PKFE…WTLQ and PSFS…AWVT. 2 disulfides stabilise this stretch: Cys435–Cys487 and Cys535–Cys583. Tyr464 carries the post-translational modification Phosphotyrosine; by ABL1 and SRC. Residue Tyr471 is modified to Phosphotyrosine; by SRC. Tyr556 carries the phosphotyrosine; by ABL1 modification. Lys608 is modified (N6-acetyllysine). The residue at position 611 (Tyr611) is a Phosphotyrosine; by ABL1. Ig-like C2-type domains lie at 620–711 and 721–821; these read PTAP…AVLT and PWFI…ALPR. A disulfide bridge connects residues Cys742 and Cys805. Phosphotyrosine; by ABL1 is present on residues Tyr792 and Tyr846. Tandem repeats lie at residues 868–895, 896–923, 924–951, and 952–979. Positions 868-998 are 5 X 28 AA approximate tandem repeats; that stretch reads DVRGVLKRRV…KKLPAENGSS (131 aa). The actin-binding (calcium/calmodulin-sensitive) stretch occupies residues 923 to 963; that stretch reads MDFRANLQRQVKPKTVSEEERKVHSPQQVDFRSVLAKKGTS. Residues 932-1098 form a disordered region; sequence QVKPKTVSEE…KRSESQGTAP (167 aa). Position 947 is a phosphoserine (Ser947). The segment at 948–963 is calmodulin-binding; the sequence is PQQVDFRSVLAKKGTS. Residues 980 to 998 form a 1-5; truncated repeat; that stretch reads DFRSVLGGKKKLPAENGSS. A 2-1; truncated repeat occupies 999–1003; the sequence is SAETL. A 6 X 12 AA approximate tandem repeats region spans residues 999 to 1063; it reads SAETLNAKAV…KPDENLKSAS (65 aa). A run of 5 repeats spans residues 1004–1015, 1016–1027, 1028–1039, 1040–1051, and 1052–1063. The segment covering 1054–1077 has biased composition (basic and acidic residues); it reads KPDENLKSASKEELKKDVKNDVNC. Residues 1061–1460 form an actin-binding (calcium/calmodulin-insensitive) region; that stretch reads SASKEELKKD…TVTINTEQKV (400 aa). In terms of domain architecture, Ig-like C2-type 7 spans 1098–1186; that stretch reads PAFKQKLQDV…GQAECSCQVT (89 aa). Residues Cys1119 and Cys1170 are joined by a disulfide bond. The interval 1192–1237 is disordered; the sequence is ASENTKAPEMKSRRPKSSLPPVLGTESDATVKKKPAPKTPPKAAMP. In terms of domain architecture, Ig-like C2-type 8 spans 1238–1326; the sequence is PQIIQFPEDQ…GSRQAQVNLT (89 aa). In terms of domain architecture, Fibronectin type-III spans 1334–1426; sequence PAGTPCASDI…QESELTTVGE (93 aa). Polar residues predominate over residues 1413-1422; the sequence is SEPSQESELT. The segment at 1413-1446 is disordered; sequence SEPSQESELTTVGEKPEEPKDEVEVSDDDEKEPE. Over residues 1431–1445 the composition is skewed to acidic residues; that stretch reads PKDEVEVSDDDEKEP. Ser1438 carries the post-translational modification Phosphoserine. Position 1449 is a phosphotyrosine; by ABL1 (Tyr1449). The Protein kinase domain occupies 1464–1719; it reads YDIEERLGSG…CTQCLQHPWL (256 aa). Residues 1470–1478 and Lys1493 each bind ATP; that span reads LGSGKFGQV. A Phosphotyrosine; by ABL1 modification is found at Tyr1575. Catalysis depends on Asp1585, which acts as the Proton acceptor. The residue at position 1635 (Tyr1635) is a Phosphotyrosine; by ABL1. The calmodulin-binding stretch occupies residues 1711–1774; it reads TQCLQHPWLM…SGLSGRKSST (64 aa). Phosphoserine is present on residues Ser1759, Ser1760, Ser1772, Ser1773, and Ser1776. Residues 1767-1787 form a disordered region; the sequence is LSGRKSSTGSPTSPLNAEKLE. The segment covering 1770–1781 has biased composition (polar residues); that stretch reads RKSSTGSPTSPL. Thr1778 is modified (phosphothreonine). At Ser1779 the chain carries Phosphoserine. One can recognise an Ig-like C2-type 9 domain in the interval 1809–1898; it reads PYFSKTIRDL…GEATCTAELI (90 aa). Cysteines 1830 and 1882 form a disulfide.

The protein belongs to the protein kinase superfamily. CAMK Ser/Thr protein kinase family. As to quaternary structure, all isoforms including Telokin bind calmodulin. Interacts with SVIL. Interacts with CTTN; this interaction is reduced during thrombin-induced endothelial cell (EC) contraction but is promoted by the barrier-protective agonist sphingosine 1-phosphate (S1P) within lamellipodia. A complex made of ABL1, CTTN and MYLK regulates cortical actin-based cytoskeletal rearrangement critical to sphingosine 1-phosphate (S1P)-mediated endothelial cell (EC) barrier enhancement. Binds to NAA10/ARD1 and PTK2B/PYK2. It depends on Mg(2+) as a cofactor. Ca(2+) is required as a cofactor. In terms of processing, can probably be down-regulated by phosphorylation. Tyrosine phosphorylation by ABL1 increases kinase activity, reverses MLCK-mediated inhibition of Arp2/3-mediated actin polymerization, and enhances CTTN-binding. Phosphorylation by SRC at Tyr-464 and Tyr-471 promotes CTTN binding. Post-translationally, the C-terminus is deglutamylated by AGTPBP1/CCP1, AGBL1/CCP4 and AGBL4/CCP6, leading to the formation of Myosin light chain kinase, smooth muscle, deglutamylated form. The consequences of C-terminal deglutamylation are unknown. Acetylated at Lys-608 by NAA10/ARD1 via a calcium-dependent signaling; this acetylation represses kinase activity and reduces tumor cell migration. In terms of tissue distribution, smooth muscle and non-muscle isozymes are expressed in a wide variety of adult and fetal tissues and in cultured endothelium with qualitative expression appearing to be neither tissue- nor development-specific. Non-muscle isoform 2 is the dominant splice variant expressed in various tissues. Telokin has been found in a wide variety of adult and fetal tissues. Accumulates in well differentiated enterocytes of the intestinal epithelium in response to tumor necrosis factor (TNF).

The protein localises to the cytoplasm. It localises to the cell projection. Its subcellular location is the lamellipodium. The protein resides in the cleavage furrow. It is found in the cytoskeleton. The protein localises to the stress fiber. It carries out the reaction L-seryl-[myosin light chain] + ATP = O-phospho-L-seryl-[myosin light chain] + ADP + H(+). The catalysed reaction is L-threonyl-[myosin light chain] + ATP = O-phospho-L-threonyl-[myosin light chain] + ADP + H(+). With respect to regulation, isoform 1 is activated by phosphorylation on Tyr-464 and Tyr-471. Isoforms which lack these tyrosine residues are not regulated in this way. All catalytically active isoforms require binding to calcium and calmodulin for activation. Repressed by organometallic pyridylnaphthalimide complexes, wortmannin, ML-7 (a synthetic naphthalenesulphonyl derivative that inhibits the binding of ATP to MLCK) and ML-9. Calcium/calmodulin-dependent myosin light chain kinase implicated in smooth muscle contraction via phosphorylation of myosin light chains (MLC). Also regulates actin-myosin interaction through a non-kinase activity. Phosphorylates PTK2B/PYK2 and myosin light-chains. Involved in the inflammatory response (e.g. apoptosis, vascular permeability, leukocyte diapedesis), cell motility and morphology, airway hyperreactivity and other activities relevant to asthma. Required for tonic airway smooth muscle contraction that is necessary for physiological and asthmatic airway resistance. Necessary for gastrointestinal motility. Implicated in the regulation of endothelial as well as vascular permeability, probably via the regulation of cytoskeletal rearrangements. In the nervous system it has been shown to control the growth initiation of astrocytic processes in culture and to participate in transmitter release at synapses formed between cultured sympathetic ganglion cells. Critical participant in signaling sequences that result in fibroblast apoptosis. Plays a role in the regulation of epithelial cell survival. Required for epithelial wound healing, especially during actomyosin ring contraction during purse-string wound closure. Mediates RhoA-dependent membrane blebbing. Triggers TRPC5 channel activity in a calcium-dependent signaling, by inducing its subcellular localization at the plasma membrane. Promotes cell migration (including tumor cells) and tumor metastasis. PTK2B/PYK2 activation by phosphorylation mediates ITGB2 activation and is thus essential to trigger neutrophil transmigration during acute lung injury (ALI). May regulate optic nerve head astrocyte migration. Probably involved in mitotic cytoskeletal regulation. Regulates tight junction probably by modulating ZO-1 exchange in the perijunctional actomyosin ring. Mediates burn-induced microvascular barrier injury; triggers endothelial contraction in the development of microvascular hyperpermeability by phosphorylating MLC. Essential for intestinal barrier dysfunction. Mediates Giardia spp.-mediated reduced epithelial barrier function during giardiasis intestinal infection via reorganization of cytoskeletal F-actin and tight junctional ZO-1. Necessary for hypotonicity-induced Ca(2+) entry and subsequent activation of volume-sensitive organic osmolyte/anion channels (VSOAC) in cervical cancer cells. Responsible for high proliferative ability of breast cancer cells through anti-apoptosis. The sequence is that of Myosin light chain kinase, smooth muscle from Homo sapiens (Human).